The following is a 152-amino-acid chain: MANKFVITWDNMQMYTRQLAEQLLPADQWKGILAVSRGGLVPAAILARELNIRHVDTVCISSYDHDHQRDMTVVKAMEGDGEGFIIIDDLVDSGDTAVKLREMYPKGKLVTVCAKPAGVHLVDAYVVDIPQDTWIEQPWDMAVTYVDPIAKK.

5-phospho-alpha-D-ribose 1-diphosphate is bound by residues Arg37–Gly38, Arg69, and Asp88–Thr96. Arg69 provides a ligand contact to GMP. Asp89 contributes to the Mg(2+) binding site. The guanine site is built by Asp92 and Ile135. Asp92 and Ile135 together coordinate xanthine. GMP contacts are provided by residues Asp92–Thr96 and Trp134–Ile135.

This sequence belongs to the purine/pyrimidine phosphoribosyltransferase family. XGPT subfamily. As to quaternary structure, homotetramer. It depends on Mg(2+) as a cofactor.

Its subcellular location is the cell inner membrane. It catalyses the reaction GMP + diphosphate = guanine + 5-phospho-alpha-D-ribose 1-diphosphate. The catalysed reaction is XMP + diphosphate = xanthine + 5-phospho-alpha-D-ribose 1-diphosphate. It carries out the reaction IMP + diphosphate = hypoxanthine + 5-phospho-alpha-D-ribose 1-diphosphate. The protein operates within purine metabolism; GMP biosynthesis via salvage pathway; GMP from guanine: step 1/1. It functions in the pathway purine metabolism; XMP biosynthesis via salvage pathway; XMP from xanthine: step 1/1. In terms of biological role, purine salvage pathway enzyme that catalyzes the transfer of the ribosyl-5-phosphate group from 5-phospho-alpha-D-ribose 1-diphosphate (PRPP) to the N9 position of the 6-oxopurines guanine and xanthine to form the corresponding ribonucleotides GMP (guanosine 5'-monophosphate) and XMP (xanthosine 5'-monophosphate), with the release of PPi. To a lesser extent, also acts on hypoxanthine. The sequence is that of Xanthine-guanine phosphoribosyltransferase from Aliivibrio fischeri (strain ATCC 700601 / ES114) (Vibrio fischeri).